A 193-amino-acid chain; its full sequence is Flagellar transcriptional regulator FlhC (193 aa).

4 residues coordinate Zn(2+): C138, C141, C158, and C161.

This sequence belongs to the FlhC family. In terms of assembly, heterohexamer composed of two FlhC and four FlhD subunits. Each FlhC binds a FlhD dimer, forming a heterotrimer, and a hexamer assembles by dimerization of two heterotrimers. The cofactor is Zn(2+).

The protein localises to the cytoplasm. Functionally, functions in complex with FlhD as a master transcriptional regulator that regulates transcription of several flagellar and non-flagellar operons by binding to their promoter region. Activates expression of class 2 flagellar genes, including fliA, which is a flagellum-specific sigma factor that turns on the class 3 genes. Also regulates genes whose products function in a variety of physiological pathways. The protein is Flagellar transcriptional regulator FlhC of Proteus mirabilis.